We begin with the raw amino-acid sequence, 408 residues long: Arginine biosynthesis bifunctional protein ArgJ (408 aa).

6 residues coordinate substrate: threonine 156, lysine 182, threonine 193, glutamate 279, asparagine 403, and serine 408. The active-site Nucleophile is the threonine 193.

Belongs to the ArgJ family. Heterotetramer of two alpha and two beta chains.

The protein resides in the cytoplasm. It carries out the reaction N(2)-acetyl-L-ornithine + L-glutamate = N-acetyl-L-glutamate + L-ornithine. The catalysed reaction is L-glutamate + acetyl-CoA = N-acetyl-L-glutamate + CoA + H(+). It functions in the pathway amino-acid biosynthesis; L-arginine biosynthesis; L-ornithine and N-acetyl-L-glutamate from L-glutamate and N(2)-acetyl-L-ornithine (cyclic): step 1/1. It participates in amino-acid biosynthesis; L-arginine biosynthesis; N(2)-acetyl-L-ornithine from L-glutamate: step 1/4. Its function is as follows. Catalyzes two activities which are involved in the cyclic version of arginine biosynthesis: the synthesis of N-acetylglutamate from glutamate and acetyl-CoA as the acetyl donor, and of ornithine by transacetylation between N(2)-acetylornithine and glutamate. The chain is Arginine biosynthesis bifunctional protein ArgJ from Dechloromonas aromatica (strain RCB).